We begin with the raw amino-acid sequence, 265 residues long: Glutamate racemase (265 aa).

Substrate contacts are provided by residues 7-8 (DS) and 39-40 (YG). The active-site Proton donor/acceptor is the Cys70. 71-72 (NT) serves as a coordination point for substrate. Cys177 acts as the Proton donor/acceptor in catalysis.

The protein belongs to the aspartate/glutamate racemases family.

The enzyme catalyses L-glutamate = D-glutamate. Its pathway is cell wall biogenesis; peptidoglycan biosynthesis. Functionally, provides the (R)-glutamate required for cell wall biosynthesis. This is Glutamate racemase from Prochlorococcus marinus (strain NATL2A).